A 298-amino-acid polypeptide reads, in one-letter code: Nucleotide-binding protein GTNG_3015 (298 aa).

17 to 24 (GMSGAGKT) contacts ATP. 68 to 71 (DLRS) is a GTP binding site.

The protein belongs to the RapZ-like family.

Functionally, displays ATPase and GTPase activities. This chain is Nucleotide-binding protein GTNG_3015, found in Geobacillus thermodenitrificans (strain NG80-2).